The following is a 334-amino-acid chain: Immune-associated nucleotide-binding protein 3 (334 aa).

The region spanning 11 to 219 is the AIG1-type G domain; it reads KAVKNIVLVG…FRGKMYLEIK (209 aa). A G1 region spans residues 20–27; the sequence is GRTGNGKS. GTP contacts are provided by residues 20–28 and S41; that span reads GRTGNGKSA. Residues 47–51 are G2; the sequence is GVTKT. The interval 69–72 is G3; it reads DTPG. Residues 139 to 142 are G4; sequence TGGD. The interval 178 to 180 is G5; sequence NNM. N179 is a binding site for GTP. The stretch at 272–306 forms a coiled coil; the sequence is SAAHERMVSMLNENLENAHRENIDLRKAHDHEQKK.

This sequence belongs to the TRAFAC class TrmE-Era-EngA-EngB-Septin-like GTPase superfamily. AIG1/Toc34/Toc159-like paraseptin GTPase family. IAN subfamily. In terms of tissue distribution, mostly expressed in pollen. Also detected in lateral roots and radicles.

This Arabidopsis thaliana (Mouse-ear cress) protein is Immune-associated nucleotide-binding protein 3.